The sequence spans 168 residues: Photosystem I assembly protein Ycf3 (168 aa).

TPR repeat units lie at residues 35 to 68 (AFTY…EIDP), 72 to 105 (SYIL…NPFL), and 120 to 153 (GEQA…TPGN).

The protein belongs to the Ycf3 family.

It localises to the plastid. Its subcellular location is the chloroplast thylakoid membrane. In terms of biological role, essential for the assembly of the photosystem I (PSI) complex. May act as a chaperone-like factor to guide the assembly of the PSI subunits. In Populus alba (White poplar), this protein is Photosystem I assembly protein Ycf3.